A 210-amino-acid chain; its full sequence is Somatotropin (210 aa).

An N-terminal signal peptide occupies residues 1–23; the sequence is MARVLVLLSVVLVSLLVNQGRAS. H38 provides a ligand contact to Zn(2+). The cysteines at positions 71 and 183 are disulfide-linked. E192 provides a ligand contact to Zn(2+). A disulfide bridge links C200 with C208.

The protein belongs to the somatotropin/prolactin family.

Its subcellular location is the secreted. Growth hormone plays an important role in growth control. The chain is Somatotropin (gh) from Cyprinus carpio (Common carp).